The primary structure comprises 274 residues: Fatty-acid O-methyltransferase (274 aa).

It belongs to the methyltransferase superfamily.

The enzyme catalyses a fatty acid + S-adenosyl-L-methionine = a fatty acid methyl ester + S-adenosyl-L-homocysteine. In terms of biological role, O-methyltransferase that modifies the hydroxy group of the fatty acids. Oleate is the most effective fatty acid acceptor. The sequence is that of Fatty-acid O-methyltransferase (mtf2) from Mycolicibacterium smegmatis (strain ATCC 700084 / mc(2)155) (Mycobacterium smegmatis).